A 101-amino-acid chain; its full sequence is Small ribosomal subunit protein uS14 (101 aa).

It belongs to the universal ribosomal protein uS14 family. As to quaternary structure, part of the 30S ribosomal subunit. Contacts proteins S3 and S10.

In terms of biological role, binds 16S rRNA, required for the assembly of 30S particles and may also be responsible for determining the conformation of the 16S rRNA at the A site. The sequence is that of Small ribosomal subunit protein uS14 from Dinoroseobacter shibae (strain DSM 16493 / NCIMB 14021 / DFL 12).